A 398-amino-acid polypeptide reads, in one-letter code: Acetate kinase (398 aa).

Residue Asn-8 coordinates Mg(2+). Lys-15 provides a ligand contact to ATP. Arg-89 provides a ligand contact to substrate. Asp-146 (proton donor/acceptor) is an active-site residue. ATP is bound by residues 206–210 (HIGNG), 283–285 (DMR), and 331–335 (GMGEN). Glu-383 is a Mg(2+) binding site.

It belongs to the acetokinase family. As to quaternary structure, homodimer. It depends on Mg(2+) as a cofactor. Mn(2+) is required as a cofactor.

It is found in the cytoplasm. It catalyses the reaction acetate + ATP = acetyl phosphate + ADP. It functions in the pathway metabolic intermediate biosynthesis; acetyl-CoA biosynthesis; acetyl-CoA from acetate: step 1/2. In terms of biological role, catalyzes the formation of acetyl phosphate from acetate and ATP. Can also catalyze the reverse reaction. The sequence is that of Acetate kinase from Streptococcus pyogenes serotype M6 (strain ATCC BAA-946 / MGAS10394).